The primary structure comprises 263 residues: MEDETELCFRSNKVTRLEMFVCTYGGKISSLACSHMELIKILQIAEPVKALNCNFGHQCLPGYESLIKTPKKTKNMLRRPRKTEGDGTCFNSAIEASILFKDKMYKLKCFPSTGEIQVPGVIFPDFEDGKNIIQQWVDFLQHQPIEKKIQIIEFKTIMINFKFQINPVSPRVIIHLKKFAALLEHIPTPYPIREIKPPLEDSKVSAKFMVSPGKKVRINVFLKGKINILGCNTKESAETIYTFLKDLISVHWQEILCVLPMPD.

This sequence belongs to the asfivirus B263R family.

In terms of biological role, putative TATA-binding protein. The protein is Putative TATA-binding protein pB263R of Ornithodoros (relapsing fever ticks).